The following is a 61-amino-acid chain: Large ribosomal subunit protein uL30 (61 aa).

This sequence belongs to the universal ribosomal protein uL30 family. In terms of assembly, part of the 50S ribosomal subunit.

This chain is Large ribosomal subunit protein uL30, found in Mycobacterium sp. (strain KMS).